The sequence spans 358 residues: Glutamine synthetase (358 aa).

The GS beta-grasp domain maps to 25-104 (VQAEYIWIDA…VLCECYDNDG (80 aa)). The 248-residue stretch at 111 to 358 (YRAHCKKVMD…ILVETTVLNN (248 aa)) folds into the GS catalytic domain.

The protein belongs to the glutamine synthetase family. As to quaternary structure, homooctamer.

The protein localises to the cytoplasm. It carries out the reaction L-glutamate + NH4(+) + ATP = L-glutamine + ADP + phosphate + H(+). This chain is Glutamine synthetase (GLN1), found in Cryptococcus neoformans var. neoformans serotype D (strain B-3501A) (Filobasidiella neoformans).